The following is an 89-amino-acid chain: Large ribosomal subunit protein bL31B (89 aa).

Belongs to the bacterial ribosomal protein bL31 family. Type B subfamily. In terms of assembly, part of the 50S ribosomal subunit.

The polypeptide is Large ribosomal subunit protein bL31B (Corynebacterium aurimucosum (strain ATCC 700975 / DSM 44827 / CIP 107346 / CN-1) (Corynebacterium nigricans)).